A 90-amino-acid polypeptide reads, in one-letter code: Putative regulatory protein Cbei_1140 (90 aa).

Belongs to the RemA family.

In Clostridium beijerinckii (strain ATCC 51743 / NCIMB 8052) (Clostridium acetobutylicum), this protein is Putative regulatory protein Cbei_1140.